We begin with the raw amino-acid sequence, 806 residues long: MRSCTAAPGVSRTNTHARRGLGVAYRWAVSKTTRAQSGRLSSRFWRLLGATTEKNQNRSLAQVTASAEFDKEAADLNDEKLRKAAGLLNLEDLADSADIPQFLAIAREAGERATGLRPFDVQLLGALRMLAGDVIEMATGEGKTLAGAIAAAGYALGGRHVHVVTINDYLARRDAEWMAPLLEAMDLTVGWITAESTGADRRAAYECDVTYASVNEIGFDVLRDQLVTDVADLVSPNPDVALIDEADSVLVDEALVPLVLAGTTHRETPRLEIIKLVAQLVKDKDADEYFATDADSRNVHLTEAGARKVEKALGGIDLYSEEHVGTTLTEVNVALHAHVLLQRDVHYIVRDDAVHLINASRGRIAQLQRWPDGLQAAVEAKEGIETTETGEVLDTITVQALINRYVTVCGMTGTALAAGEQLRQFYKLGVSPIPPNTPNIREDESDRVYITAAAKNDAIVEHIAEVHDTGQPVLVGTRDVAESEDLHERLLRRDIPAVVLNAKNDAEEAAVIAEAGTLSRVTVSTQMAGRGTDIRLGGSDEADHDQVAELGGLHVVGTGRHHTQRLDNQLRGRAGRQGDPGSSVFFSSWEDDVVAANLDGNKLPMETDEDGQIVSAKAAGLLDHAQRVAEGRMLDVHANTWRYNQLIAQQRAIIVDRRNTLLRTATAREELADLAPKRYKELSETVSEHRLEKICRMIMLYHLDRGWADHLAYLADIRESIHLRALGRQNPLDEFHRMAVDAFASLAADAIEAAQQTFETANVLEDEPGLDLSKLARPTSTWTYMVNDNPLSDDTLSTLSLPGVFR.

ATP-binding positions include Gln122, 140 to 144 (GEGKT), and Asp533.

The protein belongs to the SecA family. As to quaternary structure, monomer and homodimer. Part of the essential Sec protein translocation apparatus which comprises SecA, SecYEG and auxiliary proteins SecDF. Other proteins may also be involved.

It is found in the cell membrane. Its subcellular location is the cytoplasm. It catalyses the reaction ATP + H2O + cellular proteinSide 1 = ADP + phosphate + cellular proteinSide 2.. Its function is as follows. Part of the Sec protein translocase complex. Interacts with the SecYEG preprotein conducting channel. Has a central role in coupling the hydrolysis of ATP to the transfer of proteins into and across the cell membrane, serving as an ATP-driven molecular motor driving the stepwise translocation of polypeptide chains across the membrane. This Mycobacterium ulcerans (strain Agy99) protein is Protein translocase subunit SecA 2.